A 141-amino-acid chain; its full sequence is Large ribosomal subunit protein uL16 (141 aa).

The protein belongs to the universal ribosomal protein uL16 family. As to quaternary structure, part of the 50S ribosomal subunit.

Its function is as follows. Binds 23S rRNA and is also seen to make contacts with the A and possibly P site tRNAs. The protein is Large ribosomal subunit protein uL16 of Kosmotoga olearia (strain ATCC BAA-1733 / DSM 21960 / TBF 19.5.1).